Consider the following 1555-residue polypeptide: Probable serine/threonine-protein kinase DDB_G0276181 (1555 aa).

Disordered stretches follow at residues 1-54 (MTSV…NNSF), 138-208 (IIQQ…NSKL), 342-452 (KLKK…DSPF), 486-508 (TTTT…IKPL), and 781-850 (NNIN…NQNT). 4 stretches are compositionally biased toward low complexity: residues 14–53 (NNSG…NNNS), 138–205 (IIQQ…NNNN), 359–378 (SNIA…KING), and 395–431 (NNSQ…SKKP). Positions 58–238 (QVLHTGYLTK…WIEMIKLAIS (181 aa)) constitute a PH domain. Positions 437–452 (RNISTSDNGSGTDSPF) are enriched in polar residues. Composition is skewed to low complexity over residues 486–504 (TTTT…TNTN) and 781–832 (NNIN…NNNN). Over residues 833 to 850 (GSGLLSSSPLITISNQNT) the composition is skewed to polar residues. Residues 986-1309 (VVLHERLGTG…TIIHSISKMI (324 aa)) form the Protein kinase domain. 992 to 1000 (LGTGATGDI) is a binding site for ATP. A disordered region spans residues 1012 to 1031 (RHISNQDSSGSNSSGSGSGH). An ATP-binding site is contributed by Lys1061. Asp1156 serves as the catalytic Proton acceptor. The span at 1340–1376 (VQNNNNNSNNNNNNNNNNNNNNSNSNLNNCNNSSPNL) shows a compositional bias: low complexity. Disordered stretches follow at residues 1340–1383 (VQNN…SANN) and 1457–1480 (KKSS…GSSR).

The protein belongs to the protein kinase superfamily. TKL Ser/Thr protein kinase family.

The enzyme catalyses L-seryl-[protein] + ATP = O-phospho-L-seryl-[protein] + ADP + H(+). It catalyses the reaction L-threonyl-[protein] + ATP = O-phospho-L-threonyl-[protein] + ADP + H(+). In Dictyostelium discoideum (Social amoeba), this protein is Probable serine/threonine-protein kinase DDB_G0276181.